We begin with the raw amino-acid sequence, 257 residues long: Ribosome maturation factor RimP (257 aa).

The disordered stretch occupies residues 182–257 (LRRGGPPAAD…SRLKDRDSLH (76 aa)). Residues 191–205 (DEADEAEEAEDEEVA) show a composition bias toward acidic residues. Positions 224-236 (KASPAAKPQKQAR) are enriched in low complexity.

The protein belongs to the RimP family.

It is found in the cytoplasm. In terms of biological role, required for maturation of 30S ribosomal subunits. The protein is Ribosome maturation factor RimP of Methylobacterium radiotolerans (strain ATCC 27329 / DSM 1819 / JCM 2831 / NBRC 15690 / NCIMB 10815 / 0-1).